Reading from the N-terminus, the 232-residue chain is Platelet-activating factor acetylhydrolase IB subunit alpha1 (232 aa).

The residue at position 2 (Ser2) is an N-acetylserine. A Phosphoserine modification is found at Ser2. Active-site residues include Ser47, Asp192, and His195.

This sequence belongs to the 'GDSL' lipolytic enzyme family. Platelet-activating factor acetylhydrolase IB beta/gamma subunits subfamily. Forms a catalytic dimer which is either homodimer (alpha1/alpha1 homodimer) or heterodimer with PAFAH1B2 (alpha1/alpha2 heterodimer). Component of the cytosolic (PAF-AH (I)) heterotetrameric enzyme, which is composed of PAFAH1B1 (beta), PAFAH1B2 (alpha2) and PAFAH1B3 (alpha1) subunits. The catalytic activity of the enzyme resides in the alpha1 (PAFAH1B3) and alpha2 (PAFAH1B2) subunits, whereas the beta subunit (PAFAH1B1) has regulatory activity. Trimer formation is not essential for the catalytic activity. Interacts with VLDLR; this interaction may modulate the Reelin pathway.

Its subcellular location is the cytoplasm. The enzyme catalyses a 1-O-alkyl-2-acetyl-sn-glycero-3-phosphocholine + H2O = a 1-O-alkyl-sn-glycero-3-phosphocholine + acetate + H(+). It catalyses the reaction 1-O-hexadecyl-2-acetyl-sn-glycero-3-phosphocholine + H2O = 1-O-hexadecyl-sn-glycero-3-phosphocholine + acetate + H(+). It carries out the reaction 1-O-hexadecyl-2-acetyl-sn-glycero-3-phosphate + H2O = 1-O-hexadecyl-sn-glycero-3-phosphate + acetate + H(+). Beta subunit (PAFAH1B1) inhibits the acetylhydrolase activity of the alpha1/alpha1 catalytic homodimer. In terms of biological role, alpha1 catalytic subunit of the cytosolic type I platelet-activating factor (PAF) acetylhydrolase (PAF-AH (I)) heterotetrameric enzyme that catalyzes the hydrolyze of the acetyl group at the sn-2 position of PAF and its analogs and modulates the action of PAF. The activity and substrate specificity of PAF-AH (I) are affected by its subunit composition. Both alpha1/alpha1 homodimer (PAFAH1B3/PAFAH1B3 homodimer) and alpha1/alpha2 heterodimer(PAFAH1B3/PAFAH1B2 heterodimer) hydrolyze 1-O-alkyl-2-acetyl-sn-glycero-3-phosphoric acid (AAGPA) more efficiently than PAF, but they have little hydrolytic activity towards 1-O-alkyl-2-acetyl-sn-glycero-3-phosphorylethanolamine (AAGPE). Plays an important role during the development of brain. This Bos taurus (Bovine) protein is Platelet-activating factor acetylhydrolase IB subunit alpha1.